Consider the following 309-residue polypeptide: Ornithine carbamoyltransferase (309 aa).

Residues 57–60 (STRT), glutamine 84, arginine 108, and 135–138 (HPCQ) each bind carbamoyl phosphate. L-ornithine contacts are provided by residues asparagine 166, aspartate 226, and 230-231 (SM). Carbamoyl phosphate contacts are provided by residues 265-266 (CL) and arginine 293.

The protein belongs to the aspartate/ornithine carbamoyltransferase superfamily. OTCase family.

It localises to the cytoplasm. It catalyses the reaction carbamoyl phosphate + L-ornithine = L-citrulline + phosphate + H(+). It functions in the pathway amino-acid biosynthesis; L-arginine biosynthesis; L-arginine from L-ornithine and carbamoyl phosphate: step 1/3. Functionally, reversibly catalyzes the transfer of the carbamoyl group from carbamoyl phosphate (CP) to the N(epsilon) atom of ornithine (ORN) to produce L-citrulline. This chain is Ornithine carbamoyltransferase, found in Rhizorhabdus wittichii (strain DSM 6014 / CCUG 31198 / JCM 15750 / NBRC 105917 / EY 4224 / RW1) (Sphingomonas wittichii).